The following is a 336-amino-acid chain: Holliday junction branch migration complex subunit RuvB (336 aa).

The interval 1–181 is large ATPase domain (RuvB-L); that stretch reads MDRIVEIEKF…FGMQFRLEFY (181 aa). Residues Leu20, Arg21, Gly62, Lys65, Thr66, Thr67, 128–130, Arg171, Tyr181, and Arg218 each bind ATP; that span reads EDF. Thr66 lines the Mg(2+) pocket. Residues 182-252 are small ATPAse domain (RuvB-S); sequence KNEELAIILE…RAKEALDSLG (71 aa). A head domain (RuvB-H) region spans residues 255 to 336; the sequence is ELGFDAMDLR…KYNKGLFDEK (82 aa). The DNA site is built by Arg309 and Arg314.

Belongs to the RuvB family. Homohexamer. Forms an RuvA(8)-RuvB(12)-Holliday junction (HJ) complex. HJ DNA is sandwiched between 2 RuvA tetramers; dsDNA enters through RuvA and exits via RuvB. An RuvB hexamer assembles on each DNA strand where it exits the tetramer. Each RuvB hexamer is contacted by two RuvA subunits (via domain III) on 2 adjacent RuvB subunits; this complex drives branch migration. In the full resolvosome a probable DNA-RuvA(4)-RuvB(12)-RuvC(2) complex forms which resolves the HJ.

It localises to the cytoplasm. It carries out the reaction ATP + H2O = ADP + phosphate + H(+). Its function is as follows. The RuvA-RuvB-RuvC complex processes Holliday junction (HJ) DNA during genetic recombination and DNA repair, while the RuvA-RuvB complex plays an important role in the rescue of blocked DNA replication forks via replication fork reversal (RFR). RuvA specifically binds to HJ cruciform DNA, conferring on it an open structure. The RuvB hexamer acts as an ATP-dependent pump, pulling dsDNA into and through the RuvAB complex. RuvB forms 2 homohexamers on either side of HJ DNA bound by 1 or 2 RuvA tetramers; 4 subunits per hexamer contact DNA at a time. Coordinated motions by a converter formed by DNA-disengaged RuvB subunits stimulates ATP hydrolysis and nucleotide exchange. Immobilization of the converter enables RuvB to convert the ATP-contained energy into a lever motion, pulling 2 nucleotides of DNA out of the RuvA tetramer per ATP hydrolyzed, thus driving DNA branch migration. The RuvB motors rotate together with the DNA substrate, which together with the progressing nucleotide cycle form the mechanistic basis for DNA recombination by continuous HJ branch migration. Branch migration allows RuvC to scan DNA until it finds its consensus sequence, where it cleaves and resolves cruciform DNA. The sequence is that of Holliday junction branch migration complex subunit RuvB from Campylobacter lari (strain RM2100 / D67 / ATCC BAA-1060).